Here is a 501-residue protein sequence, read N- to C-terminus: Bifunctional pantoate ligase/cytidylate kinase (501 aa).

The pantoate--beta-alanine ligase stretch occupies residues 1–264 (MLSTQAELAA…CGTTRLIDHS (264 aa)). 25–32 (MGGLHQGH) lines the ATP pocket. The Proton donor role is filled by His-32. Gln-55 serves as a coordination point for (R)-pantoate. Residue Gln-55 coordinates beta-alanine. Position 144–147 (144–147 (GEKD)) interacts with ATP. Gln-150 is a binding site for (R)-pantoate. ATP-binding positions include Val-173 and 181–184 (LSSR). The segment at 265–501 (FLMTRQPLVA…PEEAWPTPAG (237 aa)) is cytidylate kinase.

In the N-terminal section; belongs to the pantothenate synthetase family. It in the C-terminal section; belongs to the cytidylate kinase family. Type 1 subfamily.

It localises to the cytoplasm. The enzyme catalyses (R)-pantoate + beta-alanine + ATP = (R)-pantothenate + AMP + diphosphate + H(+). It carries out the reaction CMP + ATP = CDP + ADP. The catalysed reaction is dCMP + ATP = dCDP + ADP. It functions in the pathway cofactor biosynthesis; (R)-pantothenate biosynthesis; (R)-pantothenate from (R)-pantoate and beta-alanine: step 1/1. Catalyzes the condensation of pantoate with beta-alanine in an ATP-dependent reaction via a pantoyl-adenylate intermediate. In terms of biological role, catalyzes the transfer of a phosphate group from ATP to either CMP or dCMP to form CDP or dCDP and ADP, respectively. The sequence is that of Bifunctional pantoate ligase/cytidylate kinase from Parasynechococcus marenigrum (strain WH8102).